The sequence spans 120 residues: Thiosulfate sulfurtransferase 16, chloroplastic (120 aa).

Residues 20 to 120 (LLAGHRYLDV…WAKNGLPTKA (101 aa)) enclose the Rhodanese domain. Cysteine 80 functions as the Cysteine persulfide intermediate in the catalytic mechanism. Position 85 (arginine 85) interacts with substrate.

Monomer.

It is found in the plastid. The protein resides in the chloroplast. The catalysed reaction is thiosulfate + hydrogen cyanide = thiocyanate + sulfite + 2 H(+). Its function is as follows. Thought to act during the early stages of leaf senescence. Catalyzes the transfer of a sulfur ion from a donor to cyanide or to other thiol compounds. Substrate preference is thiosulfate &gt; 3-mercaptopyruvate. In Arabidopsis thaliana (Mouse-ear cress), this protein is Thiosulfate sulfurtransferase 16, chloroplastic (STR16).